The primary structure comprises 922 residues: Translation initiation factor IF-2 (922 aa).

Positions 243–329 (AAREAAKLAE…GKSKSGQEET (87 aa)) are disordered. Positions 250–264 (LAEAQKAAAPAPAAP) are enriched in low complexity. Over residues 267–298 (KTLHKPDKPAAAKGAKGPDKKPAGAWKDDAAR) the composition is skewed to basic and acidic residues. One can recognise a tr-type G domain in the interval 422 to 589 (ARPPVVTVMG…AILLQAEVLE (168 aa)). The segment at 431–438 (GHVDHGKT) is G1. 431–438 (GHVDHGKT) contacts GTP. The segment at 456–460 (GITQH) is G2. The tract at residues 477-480 (DTPG) is G3. GTP-binding positions include 477 to 481 (DTPGH) and 531 to 534 (NKID). The G4 stretch occupies residues 531 to 534 (NKID). Positions 567-569 (SAK) are G5.

The protein belongs to the TRAFAC class translation factor GTPase superfamily. Classic translation factor GTPase family. IF-2 subfamily.

The protein localises to the cytoplasm. One of the essential components for the initiation of protein synthesis. Protects formylmethionyl-tRNA from spontaneous hydrolysis and promotes its binding to the 30S ribosomal subunits. Also involved in the hydrolysis of GTP during the formation of the 70S ribosomal complex. This chain is Translation initiation factor IF-2, found in Thiobacillus denitrificans (strain ATCC 25259 / T1).